A 116-amino-acid chain; its full sequence is Iron-sulfur cluster insertion protein ErpA (116 aa).

Iron-sulfur cluster-binding residues include cysteine 44, cysteine 108, and cysteine 110.

Belongs to the HesB/IscA family. As to quaternary structure, homodimer. Requires iron-sulfur cluster as cofactor.

In terms of biological role, required for insertion of 4Fe-4S clusters for at least IspG. The chain is Iron-sulfur cluster insertion protein ErpA from Pseudomonas aeruginosa (strain LESB58).